Here is a 240-residue protein sequence, read N- to C-terminus: DNA repair protein RecO (240 aa).

The protein belongs to the RecO family.

Involved in DNA repair and RecF pathway recombination. The chain is DNA repair protein RecO from Xanthomonas euvesicatoria pv. vesicatoria (strain 85-10) (Xanthomonas campestris pv. vesicatoria).